The following is a 415-amino-acid chain: S-inosyl-L-homocysteine hydrolase (415 aa).

2 residues coordinate substrate: D123 and E148. 149 to 151 (TTT) lines the NAD(+) pocket. Substrate is bound by residues K178 and D182. NAD(+) contacts are provided by residues N183, 212–217 (GYGWCG), E235, 291–293 (AGH), and N337.

The protein belongs to the adenosylhomocysteinase family. It depends on NAD(+) as a cofactor.

The protein localises to the cytoplasm. The enzyme catalyses S-inosyl-L-homocysteine + H2O = L-homocysteine + inosine. Its pathway is amino-acid biosynthesis; S-adenosyl-L-methionine biosynthesis. Functionally, catalyzes the hydrolysis of S-inosyl-L-homocysteine (SIH) to L-homocysteine (Hcy) and inosine. Likely functions in a S-adenosyl-L-methionine (SAM) recycling pathway from S-adenosyl-L-homocysteine (SAH) produced from SAM-dependent methylation reactions. Can also catalyze the reverse reaction in vitro, i.e. the synthesis of SIH from Hcy and inosine. The protein is S-inosyl-L-homocysteine hydrolase of Methanococcus maripaludis (strain DSM 14266 / JCM 13030 / NBRC 101832 / S2 / LL).